The following is a 367-amino-acid chain: o-succinylbenzoate synthase (367 aa).

Residue K164 is the Proton donor of the active site. Mg(2+) is bound by residues D189, E214, and D239. Residue K263 is the Proton acceptor of the active site.

The protein belongs to the mandelate racemase/muconate lactonizing enzyme family. MenC type 2 subfamily. In terms of assembly, homodimer. It depends on a divalent metal cation as a cofactor.

It catalyses the reaction (1R,6R)-6-hydroxy-2-succinyl-cyclohexa-2,4-diene-1-carboxylate = 2-succinylbenzoate + H2O. The protein operates within quinol/quinone metabolism; 1,4-dihydroxy-2-naphthoate biosynthesis; 1,4-dihydroxy-2-naphthoate from chorismate: step 4/7. It participates in quinol/quinone metabolism; menaquinone biosynthesis. In terms of biological role, converts 2-succinyl-6-hydroxy-2,4-cyclohexadiene-1-carboxylate (SHCHC) to 2-succinylbenzoate (OSB). Also acts as a N-succinylamino acid racemase (NSAR) that catalyzes the racemization of N-succinyl-L-phenylglycine. Since the gene is encoded in a menaquinone synthesis operon, OSB synthase is probably the physiological activity. A pathway that requires NSAR activity has not been identified in this species, so whether NSAR is also a biological activity is unknown. The sequence is that of o-succinylbenzoate synthase from Enterococcus faecalis (strain ATCC 700802 / V583).